A 139-amino-acid polypeptide reads, in one-letter code: uncharacterized protein (139 aa).

The HIT domain occupies 5–114; sequence IFCKIINKEL…IPRFKNDGFG (110 aa). The short motif at 99 to 103 is the Histidine triad motif element; sequence HTHFH.

This is an uncharacterized protein from Borreliella burgdorferi (strain ATCC 35210 / DSM 4680 / CIP 102532 / B31) (Borrelia burgdorferi).